We begin with the raw amino-acid sequence, 444 residues long: MTDAVWNERRLGEDKQRRNDHRSPYQRDRARILHSAAFRRLQAKTQVLGVGMNDFYRTRLTHSLEVSQIGTGICAQLKQKQPQHNPLLDSMSLIESLCLAHDIGHPPFGHGGEVALNYMMRKHGGFEGNGQTFRILTRLEPYTEHFGMNLCRRTLLGILKYPAPYTNLCVGTPEESVDDFRQLKPSKWPPVKGIFDDDREILDWVLAPLSQQDRAKFLSSHVVKDIKHKRTRFKSLDCSIMELADDIAYAVHDLEDAIVMGIVSEQQWHTDVSLPLSQSNDPWLKNEFATISQRLFSAKHHLRKDAIGTLVNGFVTAIAITEVDGFEEPLLRYNAALEPAFHEALSILKQFVYKYVIRKPEIQMLEYKGQQIVMELFEAFISDPERLLPLNTQERWLAHERLGENSHRVIADYISGMTDGFAARLHQHLFSAKSHSMMDFNSDF.

The disordered stretch occupies residues 1–28; that stretch reads MTDAVWNERRLGEDKQRRNDHRSPYQRD. One can recognise an HD domain in the interval 59–250; it reads RLTHSLEVSQ…MELADDIAYA (192 aa).

The protein belongs to the dGTPase family. Type 2 subfamily.

This is Deoxyguanosinetriphosphate triphosphohydrolase-like protein from Shewanella pealeana (strain ATCC 700345 / ANG-SQ1).